The chain runs to 319 residues: D-alanine--D-alanine ligase B (319 aa).

The 196-residue stretch at 117-312 folds into the ATP-grasp domain; it reads KRVWLSLGLP…FQQLVLAILA (196 aa). 143 to 198 contacts ATP; it reads AQRLGFPLIVKPAHEGSSIGMAKVGGLDELIAAWREAARYDSQVLVEQWISGPEFT. Positions 266, 279, and 281 each coordinate Mg(2+).

This sequence belongs to the D-alanine--D-alanine ligase family. Requires Mg(2+) as cofactor. Mn(2+) is required as a cofactor.

It localises to the cytoplasm. It catalyses the reaction 2 D-alanine + ATP = D-alanyl-D-alanine + ADP + phosphate + H(+). The protein operates within cell wall biogenesis; peptidoglycan biosynthesis. Functionally, cell wall formation. The polypeptide is D-alanine--D-alanine ligase B (Pseudomonas aeruginosa (strain ATCC 15692 / DSM 22644 / CIP 104116 / JCM 14847 / LMG 12228 / 1C / PRS 101 / PAO1)).